Reading from the N-terminus, the 461-residue chain is tRNA modification GTPase MnmE (461 aa).

Residues R27, E89, and R128 each coordinate (6S)-5-formyl-5,6,7,8-tetrahydrofolate. A TrmE-type G domain is found at 224–382 (GLATAIVGQP…LEELINKLFF (159 aa)). N234 contributes to the K(+) binding site. Residues 234 to 239 (NVGKSS), 253 to 259 (TDVAGTT), and 278 to 281 (DTAG) each bind GTP. S238 contacts Mg(2+). Residues T253, V255, and T258 each contribute to the K(+) site. A Mg(2+)-binding site is contributed by T259. K461 is a (6S)-5-formyl-5,6,7,8-tetrahydrofolate binding site.

Belongs to the TRAFAC class TrmE-Era-EngA-EngB-Septin-like GTPase superfamily. TrmE GTPase family. Homodimer. Heterotetramer of two MnmE and two MnmG subunits. K(+) serves as cofactor.

The protein resides in the cytoplasm. Functionally, exhibits a very high intrinsic GTPase hydrolysis rate. Involved in the addition of a carboxymethylaminomethyl (cmnm) group at the wobble position (U34) of certain tRNAs, forming tRNA-cmnm(5)s(2)U34. The polypeptide is tRNA modification GTPase MnmE (Lactobacillus acidophilus (strain ATCC 700396 / NCK56 / N2 / NCFM)).